A 375-amino-acid chain; its full sequence is Anhydro-N-acetylmuramic acid kinase (375 aa).

Residue 14-21 coordinates ATP; the sequence is GTSMDGAD.

It belongs to the anhydro-N-acetylmuramic acid kinase family.

It catalyses the reaction 1,6-anhydro-N-acetyl-beta-muramate + ATP + H2O = N-acetyl-D-muramate 6-phosphate + ADP + H(+). It functions in the pathway amino-sugar metabolism; 1,6-anhydro-N-acetylmuramate degradation. Its pathway is cell wall biogenesis; peptidoglycan recycling. Functionally, catalyzes the specific phosphorylation of 1,6-anhydro-N-acetylmuramic acid (anhMurNAc) with the simultaneous cleavage of the 1,6-anhydro ring, generating MurNAc-6-P. Is required for the utilization of anhMurNAc either imported from the medium or derived from its own cell wall murein, and thus plays a role in cell wall recycling. The polypeptide is Anhydro-N-acetylmuramic acid kinase (Cupriavidus pinatubonensis (strain JMP 134 / LMG 1197) (Cupriavidus necator (strain JMP 134))).